The following is a 116-amino-acid chain: Large ribosomal subunit protein bL19c (116 aa).

This sequence belongs to the bacterial ribosomal protein bL19 family.

It localises to the plastid. The protein resides in the chloroplast. This Cyanidium caldarium (Red alga) protein is Large ribosomal subunit protein bL19c.